Here is a 139-residue protein sequence, read N- to C-terminus: Transcription antitermination protein NusB (139 aa).

This sequence belongs to the NusB family.

Its function is as follows. Involved in transcription antitermination. Required for transcription of ribosomal RNA (rRNA) genes. Binds specifically to the boxA antiterminator sequence of the ribosomal RNA (rrn) operons. The sequence is that of Transcription antitermination protein NusB from Limosilactobacillus fermentum (strain NBRC 3956 / LMG 18251) (Lactobacillus fermentum).